We begin with the raw amino-acid sequence, 202 residues long: ATP-dependent Clp protease proteolytic subunit (202 aa).

The active-site Nucleophile is S101. H126 is a catalytic residue.

The protein belongs to the peptidase S14 family. Component of the chloroplastic Clp protease core complex.

Its subcellular location is the plastid. It localises to the chloroplast stroma. It carries out the reaction Hydrolysis of proteins to small peptides in the presence of ATP and magnesium. alpha-casein is the usual test substrate. In the absence of ATP, only oligopeptides shorter than five residues are hydrolyzed (such as succinyl-Leu-Tyr-|-NHMec, and Leu-Tyr-Leu-|-Tyr-Trp, in which cleavage of the -Tyr-|-Leu- and -Tyr-|-Trp bonds also occurs).. Its function is as follows. Cleaves peptides in various proteins in a process that requires ATP hydrolysis. Has a chymotrypsin-like activity. Plays a major role in the degradation of misfolded proteins. In Illicium oligandrum (Star anise), this protein is ATP-dependent Clp protease proteolytic subunit.